A 250-amino-acid chain; its full sequence is 2,3-bisphosphoglycerate-dependent phosphoglycerate mutase (250 aa).

Substrate-binding positions include 10 to 17, 23 to 24, arginine 62, 89 to 92, lysine 100, 116 to 117, and 185 to 186; these read RHGESQWN, TG, ERHY, RR, and GN. Histidine 11 serves as the catalytic Tele-phosphohistidine intermediate. Residue glutamate 89 is the Proton donor/acceptor of the active site.

It belongs to the phosphoglycerate mutase family. BPG-dependent PGAM subfamily. As to quaternary structure, homodimer.

The catalysed reaction is (2R)-2-phosphoglycerate = (2R)-3-phosphoglycerate. It functions in the pathway carbohydrate degradation; glycolysis; pyruvate from D-glyceraldehyde 3-phosphate: step 3/5. Functionally, catalyzes the interconversion of 2-phosphoglycerate and 3-phosphoglycerate. This Shigella boydii serotype 4 (strain Sb227) protein is 2,3-bisphosphoglycerate-dependent phosphoglycerate mutase.